The following is a 387-amino-acid chain: Cytochrome b (387 aa).

Helical transmembrane passes span 32-52, 76-98, 113-133, 179-199, 225-245, 290-310, 325-345, and 353-373; these read FGFFSLVCLIIQLVSGILLAM, WLLRYVHANGASFFFIVVYVHML, LWVSGVVIFLLLIITGFLGYV, FFSLHYLCPFIIVGLVGLHII, FTIKDLFSFMIFLVLFFAFVF, LGVLALVLAIVVLAFLPFLTI, LFWSFLALCFFLGFLGSQPAA, and LYSTILYFVYILVLFPYIYMV. Heme b is bound by residues His-82 and His-96. Residues His-183 and His-197 each contribute to the heme b site.

This sequence belongs to the cytochrome b family. As to quaternary structure, the main subunits of complex b-c1 are: cytochrome b, cytochrome c1 and the Rieske protein. The cofactor is heme b.

It is found in the mitochondrion inner membrane. Its function is as follows. Component of the ubiquinol-cytochrome c reductase complex (complex III or cytochrome b-c1 complex) that is part of the mitochondrial respiratory chain. The b-c1 complex mediates electron transfer from ubiquinol to cytochrome c. Contributes to the generation of a proton gradient across the mitochondrial membrane that is then used for ATP synthesis. The polypeptide is Cytochrome b (cytB) (Dictyostelium citrinum (Slime mold)).